Consider the following 527-residue polypeptide: Catalase (527 aa).

A2 bears the N-acetylalanine mark. A Phosphoserine modification is found at S9. Active-site residues include H75 and N148. NADP(+) contacts are provided by H194, S201, R203, and N213. An N6-succinyllysine modification is found at K221. N6-acetyllysine is present on K233. The NADP(+) site is built by K237, W303, H305, and K306. K306 is subject to N6-acetyllysine; alternate. Position 306 is an N6-succinyllysine; alternate (K306). Residue Y358 coordinates heme. 2 positions are modified to phosphoserine: S417 and S422. K480 is modified (N6-acetyllysine; alternate). K480 bears the N6-succinyllysine; alternate mark. N6-acetyllysine is present on K499. T511 carries the post-translational modification Phosphothreonine. Residues S515 and S517 each carry the phosphoserine modification. The short motif at K524–L527 is the Microbody targeting signal; atypical element.

This sequence belongs to the catalase family. In terms of assembly, homotetramer. Interacts (via microbody targeting signal) with PEX5, monomeric form interacts with PEX5, leading to its translocation into peroxisomes. It depends on heme as a cofactor. The cofactor is NADP(+).

It localises to the peroxisome matrix. The catalysed reaction is 2 H2O2 = O2 + 2 H2O. Functionally, catalyzes the degradation of hydrogen peroxide (H(2)O(2)) generated by peroxisomal oxidases to water and oxygen, thereby protecting cells from the toxic effects of hydrogen peroxide. Promotes growth of cells including T-cells, B-cells, myeloid leukemia cells, melanoma cells, mastocytoma cells and normal and transformed fibroblast cells. The sequence is that of Catalase (CAT) from Homo sapiens (Human).